We begin with the raw amino-acid sequence, 419 residues long: Putative zinc metalloprotease SPy_1963/M5005_Spy1674 (419 aa).

Position 18 (histidine 18) interacts with Zn(2+). Residue glutamate 19 is part of the active site. Histidine 22 provides a ligand contact to Zn(2+). 4 helical membrane-spanning segments follow: residues 169 to 191, 301 to 323, 343 to 365, and 392 to 411; these read LITNFAGPMNNFILGIVVFILLV, LAWSRAFTILNALKGLITGFSLN, LESVLSLMAMLSINLGIFNLIPI, and AYITLAGVAIMVVLMIAVTW. The PDZ domain occupies 175–274; sequence GPMNNFILGI…LKTVAVKPQK (100 aa).

The protein belongs to the peptidase M50B family. Zn(2+) serves as cofactor.

The protein resides in the cell membrane. This chain is Putative zinc metalloprotease SPy_1963/M5005_Spy1674, found in Streptococcus pyogenes serotype M1.